The primary structure comprises 308 residues: Methionyl-tRNA formyltransferase (308 aa).

109–112 (SLLP) lines the (6S)-5,6,7,8-tetrahydrofolate pocket.

Belongs to the Fmt family.

It carries out the reaction L-methionyl-tRNA(fMet) + (6R)-10-formyltetrahydrofolate = N-formyl-L-methionyl-tRNA(fMet) + (6S)-5,6,7,8-tetrahydrofolate + H(+). In terms of biological role, attaches a formyl group to the free amino group of methionyl-tRNA(fMet). The formyl group appears to play a dual role in the initiator identity of N-formylmethionyl-tRNA by promoting its recognition by IF2 and preventing the misappropriation of this tRNA by the elongation apparatus. This Salinispora arenicola (strain CNS-205) protein is Methionyl-tRNA formyltransferase.